Reading from the N-terminus, the 712-residue chain is Polyribonucleotide nucleotidyltransferase (712 aa).

The Mg(2+) site is built by Asp487 and Asp493. The KH domain occupies 554–613 (PKILTMQINPEKIREVIGPSGKQINKIIDETGVKIDIEQDGTIFISSVNEAMNQKAKQII). Residues 623–691 (GQIYLGKVKR…KQGRVNLSRK (69 aa)) enclose the S1 motif domain.

The protein belongs to the polyribonucleotide nucleotidyltransferase family. Mg(2+) is required as a cofactor.

It is found in the cytoplasm. It catalyses the reaction RNA(n+1) + phosphate = RNA(n) + a ribonucleoside 5'-diphosphate. Involved in mRNA degradation. Catalyzes the phosphorolysis of single-stranded polyribonucleotides processively in the 3'- to 5'-direction. The protein is Polyribonucleotide nucleotidyltransferase of Geobacillus sp. (strain WCH70).